The primary structure comprises 459 residues: Mitochondrial distribution and morphology protein 34 (459 aa).

The 190-residue stretch at 1–190 (MSFRFNEAVF…LPSLIFNTSQ (190 aa)) folds into the SMP-LTD domain. A compositionally biased stretch (basic and acidic residues) spans 338–347 (RSNSNDDNAK). The segment at 338–375 (RSNSNDDNAKPRRRKIKCKKTRTPSNLQSQGEQAVDDS) is disordered. Basic residues predominate over residues 348–359 (PRRRKIKCKKTR).

Belongs to the MDM34 family. In terms of assembly, component of the ER-mitochondria encounter structure (ERMES) or MDM complex, composed of MMM1, MDM10, MDM12 and MDM34. Ubiquitinated by a SCF (SKP1-CUL1-F-box protein) E3 ubiquitin-protein ligase complex containing the F-box protein MDM30. Ubiquitination is important for mitochondrial integrity.

The protein resides in the mitochondrion outer membrane. In terms of biological role, component of the ERMES/MDM complex, which serves as a molecular tether to connect the endoplasmic reticulum (ER) and mitochondria. Components of this complex are involved in the control of mitochondrial shape and protein biogenesis, and function in nonvesicular lipid trafficking between the ER and mitochondria. MDM34 is required for the interaction of the ER-resident membrane protein MMM1 and the outer mitochondrial membrane-resident beta-barrel protein MDM10. This Saccharomyces cerevisiae (strain RM11-1a) (Baker's yeast) protein is Mitochondrial distribution and morphology protein 34.